The primary structure comprises 699 residues: Elongation factor G (699 aa).

The tr-type G domain maps to 8–283 (EQIRNIGICA…AIVDFLPSPI (276 aa)). Residues 17 to 24 (AHIDAGKT), 81 to 85 (DTPGH), and 135 to 138 (NKMD) contribute to the GTP site.

Belongs to the TRAFAC class translation factor GTPase superfamily. Classic translation factor GTPase family. EF-G/EF-2 subfamily.

Its subcellular location is the cytoplasm. Functionally, catalyzes the GTP-dependent ribosomal translocation step during translation elongation. During this step, the ribosome changes from the pre-translocational (PRE) to the post-translocational (POST) state as the newly formed A-site-bound peptidyl-tRNA and P-site-bound deacylated tRNA move to the P and E sites, respectively. Catalyzes the coordinated movement of the two tRNA molecules, the mRNA and conformational changes in the ribosome. In Rickettsia prowazekii (strain Madrid E), this protein is Elongation factor G (fusA).